The sequence spans 287 residues: ATP synthase subunit a (287 aa).

6 helical membrane-spanning segments follow: residues 37 to 57 (LDSV…MWLA), 96 to 116 (FIAP…AMDL), 144 to 164 (DLST…VYSI), 187 to 207 (PVFA…EYVA), 224 to 244 (ELVF…LSGV), and 266 to 286 (TLQA…AHEA).

The protein belongs to the ATPase A chain family. In terms of assembly, F-type ATPases have 2 components, CF(1) - the catalytic core - and CF(0) - the membrane proton channel. CF(1) has five subunits: alpha(3), beta(3), gamma(1), delta(1), epsilon(1). CF(0) has three main subunits: a(1), b(2) and c(9-12). The alpha and beta chains form an alternating ring which encloses part of the gamma chain. CF(1) is attached to CF(0) by a central stalk formed by the gamma and epsilon chains, while a peripheral stalk is formed by the delta and b chains.

The protein resides in the cell inner membrane. Its function is as follows. Key component of the proton channel; it plays a direct role in the translocation of protons across the membrane. The sequence is that of ATP synthase subunit a from Acidovorax ebreus (strain TPSY) (Diaphorobacter sp. (strain TPSY)).